The following is a 237-amino-acid chain: DNA repair protein RecO (237 aa).

This sequence belongs to the RecO family.

Involved in DNA repair and RecF pathway recombination. The protein is DNA repair protein RecO of Actinobacillus succinogenes (strain ATCC 55618 / DSM 22257 / CCUG 43843 / 130Z).